Reading from the N-terminus, the 129-residue chain is Lysozyme C (129 aa).

Residues 1-129 form the C-type lysozyme domain; the sequence is KVFSKCELAH…LSEYLASCNL (129 aa). Intrachain disulfides connect cysteine 6/cysteine 127, cysteine 30/cysteine 115, cysteine 65/cysteine 80, and cysteine 76/cysteine 94. Catalysis depends on residues glutamate 35 and aspartate 53. Ca(2+) is bound by residues lysine 82, aspartate 85, asparagine 87, aspartate 90, and aspartate 91.

This sequence belongs to the glycosyl hydrolase 22 family. As to quaternary structure, monomer. Ca(2+) is required as a cofactor.

The enzyme catalyses Hydrolysis of (1-&gt;4)-beta-linkages between N-acetylmuramic acid and N-acetyl-D-glucosamine residues in a peptidoglycan and between N-acetyl-D-glucosamine residues in chitodextrins.. Functionally, lysozymes have primarily a bacteriolytic function; those in tissues and body fluids are associated with the monocyte-macrophage system and enhance the activity of immunoagents. The sequence is that of Lysozyme C (LYZ) from Equus asinus (Donkey).